The primary structure comprises 182 residues: Translation initiation factor IF-3 (182 aa).

The interval 1–22 (MPLGDCNISTPDNKQNRKNQEI) is disordered.

The protein belongs to the IF-3 family. Monomer.

It is found in the cytoplasm. Functionally, IF-3 binds to the 30S ribosomal subunit and shifts the equilibrium between 70S ribosomes and their 50S and 30S subunits in favor of the free subunits, thus enhancing the availability of 30S subunits on which protein synthesis initiation begins. The protein is Translation initiation factor IF-3 of Xanthomonas axonopodis pv. citri (strain 306).